Here is a 106-residue protein sequence, read N- to C-terminus: Guanylate cyclase activator 2B (106 aa).

Residues 1–21 (MSRSQLWAAVVLLLLLQSAQG) form the signal peptide. Residues 22–91 (VYIKYHGFQV…STFKALRTIA (70 aa)) constitute a propeptide that is removed on maturation. 3 disulfides stabilise this stretch: Cys62–Cys75, Cys95–Cys103, and Cys98–Cys106.

This sequence belongs to the guanylin family. Localized predominantly in intestinal villi and the corticomedullary junction of the kidney.

It is found in the secreted. Endogenous activator of intestinal guanylate cyclase. It stimulates this enzyme through the same receptor binding region as the heat-stable enterotoxins. May be a potent physiological regulator of intestinal fluid and electrolyte transport. May be an autocrine/paracrine regulator of intestinal salt and water transport. The protein is Guanylate cyclase activator 2B (Guca2b) of Mus musculus (Mouse).